The chain runs to 417 residues: Multifunctional CCA protein (417 aa).

ATP is bound by residues Gly-8 and Arg-11. Gly-8 and Arg-11 together coordinate CTP. Positions 21 and 23 each coordinate Mg(2+). Residues Arg-91, Arg-137, and Arg-140 each contribute to the ATP site. CTP-binding residues include Arg-91, Arg-137, and Arg-140. One can recognise an HD domain in the interval 225–326 (SGIHTLMTLQ…LNVLKKTDAF (102 aa)).

It belongs to the tRNA nucleotidyltransferase/poly(A) polymerase family. Bacterial CCA-adding enzyme type 1 subfamily. In terms of assembly, monomer. Can also form homodimers and oligomers. It depends on Mg(2+) as a cofactor. Requires Ni(2+) as cofactor.

It carries out the reaction a tRNA precursor + 2 CTP + ATP = a tRNA with a 3' CCA end + 3 diphosphate. The catalysed reaction is a tRNA with a 3' CCA end + 2 CTP + ATP = a tRNA with a 3' CCACCA end + 3 diphosphate. Its function is as follows. Catalyzes the addition and repair of the essential 3'-terminal CCA sequence in tRNAs without using a nucleic acid template. Adds these three nucleotides in the order of C, C, and A to the tRNA nucleotide-73, using CTP and ATP as substrates and producing inorganic pyrophosphate. tRNA 3'-terminal CCA addition is required both for tRNA processing and repair. Also involved in tRNA surveillance by mediating tandem CCA addition to generate a CCACCA at the 3' terminus of unstable tRNAs. While stable tRNAs receive only 3'-terminal CCA, unstable tRNAs are marked with CCACCA and rapidly degraded. The chain is Multifunctional CCA protein from Neisseria meningitidis serogroup A / serotype 4A (strain DSM 15465 / Z2491).